A 469-amino-acid polypeptide reads, in one-letter code: Glutamine synthetase (469 aa).

In terms of domain architecture, GS beta-grasp spans 15 to 96 (EDVKFVDVRF…INFFIHDPIT (82 aa)). A GS catalytic domain is found at 104 to 469 (PRNVAKKAEA…PHEFEMYFDV (366 aa)). Residues Glu129 and Glu131 each coordinate Mg(2+). Glu205 contributes to the ATP binding site. Residues Glu210 and Glu218 each contribute to the Mg(2+) site. 221 to 223 (YKF) is an ATP binding site. L-glutamate-binding positions include 262–263 (NG) and Gly263. Position 267 (His267) interacts with Mg(2+). ATP-binding positions include 269 to 271 (HQS) and Ser271. Residues Arg320, Glu326, and Arg338 each contribute to the L-glutamate site. ATP-binding residues include Arg338, Arg343, and Lys352. Glu357 contacts Mg(2+). Arg359 serves as a coordination point for L-glutamate. An O-AMP-tyrosine modification is found at Tyr397.

The protein belongs to the glutamine synthetase family. As to quaternary structure, oligomer of 12 subunits arranged in the form of two hexagons. Requires Mg(2+) as cofactor.

It is found in the cytoplasm. It carries out the reaction L-glutamate + NH4(+) + ATP = L-glutamine + ADP + phosphate + H(+). With respect to regulation, the activity of this enzyme could be controlled by adenylation under conditions of abundant glutamine. Its function is as follows. Catalyzes the ATP-dependent biosynthesis of glutamine from glutamate and ammonia. Complements L-glutamine auxotrophy of an E.coli glnA mutant. The sequence is that of Glutamine synthetase from Streptomyces coelicolor (strain ATCC BAA-471 / A3(2) / M145).